The chain runs to 108 residues: Small ribosomal subunit protein bS6 (108 aa).

It belongs to the bacterial ribosomal protein bS6 family.

In terms of biological role, binds together with bS18 to 16S ribosomal RNA. The chain is Small ribosomal subunit protein bS6 from Dichelobacter nodosus (strain VCS1703A).